Here is a 560-residue protein sequence, read N- to C-terminus: NAD-dependent malic enzyme (560 aa).

Tyr-100 (proton donor) is an active-site residue. Arg-153 serves as a coordination point for NAD(+). Catalysis depends on Lys-171, which acts as the Proton acceptor. A divalent metal cation-binding residues include Glu-242, Asp-243, and Asp-266. Residues Asp-266 and Asn-413 each coordinate NAD(+).

This sequence belongs to the malic enzymes family. As to quaternary structure, homotetramer. It depends on Mg(2+) as a cofactor. Mn(2+) serves as cofactor.

The enzyme catalyses (S)-malate + NAD(+) = pyruvate + CO2 + NADH. It catalyses the reaction oxaloacetate + H(+) = pyruvate + CO2. This is NAD-dependent malic enzyme from Psychrobacter cryohalolentis (strain ATCC BAA-1226 / DSM 17306 / VKM B-2378 / K5).